Reading from the N-terminus, the 111-residue chain is Repressed By RIM101 protein 1 (111 aa).

The signal sequence occupies residues 1–19 (MKFSTTLLALTASIAAVMS). A disordered region spans residues 71–90 (SGASSATGGSSAAKSGSSSG). The GPI-anchor amidated serine moiety is linked to residue Ser-81. Residues 82 to 111 (AAKSGSSSGAGFAPVAGAGSLAAIAGLLLL) constitute a propeptide, removed in mature form.

Post-translationally, the GPI-anchor is attached to the protein in the endoplasmic reticulum and serves to target the protein to the cell surface. There, the glucosamine-inositol phospholipid moiety is cleaved off and the GPI-modified mannoprotein is covalently attached via its lipidless GPI glycan remnant to the 1,6-beta-glucan of the outer cell wall layer.

It is found in the secreted. The protein localises to the cell wall. It localises to the membrane. Probable cell wall protein required for filamentation at low pH. The chain is Repressed By RIM101 protein 1 (RBR1) from Candida albicans (strain SC5314 / ATCC MYA-2876) (Yeast).